Reading from the N-terminus, the 263-residue chain is Mannose-specific lectin 2 (263 aa).

Residues 1-24 form the signal peptide; sequence MAKSLVLSSLLLALLLAAPLASLA. Bulb-type lectin domains follow at residues 26-136 and 150-260; these read NNVL…APNR and RNVL…SSAS. Cystine bridges form between cysteine 54-cysteine 76 and cysteine 178-cysteine 203.

As to quaternary structure, heterotetramer of 2 domain 1 and 2 domain 2 chains arranged as a dimer of domain 1/domain 2 heterodimers.

Functionally, mannose-specific lectin. Has weak agglutinating activity towards trypsin-treated erythrocytes from rabbit but not from human. The chain is Mannose-specific lectin 2 from Crocus vernus (Dutch crocus).